Reading from the N-terminus, the 345-residue chain is NADPH dehydrogenase (345 aa).

FMN is bound at residue 23–26; that stretch reads SPMC. A substrate-binding site is contributed by tyrosine 28. Alanine 60 and glutamine 102 together coordinate FMN. 164–167 is a binding site for substrate; sequence HGAH. FMN is bound by residues arginine 215 and 307 to 308; that span reads GR.

This sequence belongs to the NADH:flavin oxidoreductase/NADH oxidase family. NamA subfamily. As to quaternary structure, homotetramer. Requires FMN as cofactor.

The enzyme catalyses A + NADPH + H(+) = AH2 + NADP(+). In terms of biological role, catalyzes the reduction of the double bond of an array of alpha,beta-unsaturated aldehydes and ketones. It also reduces the nitro group of nitroester and nitroaromatic compounds. It could have a role in detoxification processes. The protein is NADPH dehydrogenase of Bacillus cereus (strain ZK / E33L).